The sequence spans 75 residues: Translation initiation factor IF-1 (75 aa).

Residues 1-72 enclose the S1-like domain; the sequence is MSKQDLIEME…TKGRITYRLK (72 aa).

It belongs to the IF-1 family. As to quaternary structure, component of the 30S ribosomal translation pre-initiation complex which assembles on the 30S ribosome in the order IF-2 and IF-3, IF-1 and N-formylmethionyl-tRNA(fMet); mRNA recruitment can occur at any time during PIC assembly.

The protein resides in the cytoplasm. One of the essential components for the initiation of protein synthesis. Stabilizes the binding of IF-2 and IF-3 on the 30S subunit to which N-formylmethionyl-tRNA(fMet) subsequently binds. Helps modulate mRNA selection, yielding the 30S pre-initiation complex (PIC). Upon addition of the 50S ribosomal subunit IF-1, IF-2 and IF-3 are released leaving the mature 70S translation initiation complex. This Synechocystis sp. (strain ATCC 27184 / PCC 6803 / Kazusa) protein is Translation initiation factor IF-1.